The sequence spans 380 residues: Alpha-N-acetylneuraminate alpha-2,8-sialyltransferase ST8SIA3 (380 aa).

The Cytoplasmic segment spans residues 1-9 (MRNCKMARV). The chain crosses the membrane as a helical; Signal-anchor for type II membrane protein span at residues 10-33 (ASVLGLVMLSVALLILSLISYVSL). Residues 34 to 380 (KKENIFTTPK…LTKLTLSHCA (347 aa)) lie on the Lumenal side of the membrane. N-linked (GlcNAc...) asparagine glycans are attached at residues Asn93, Asn113, and Asn160. Disulfide bonds link Cys162–Cys313 and Cys176–Cys379. Residues Asn167 and Asn190 each coordinate CMP-N-acetyl-beta-neuraminate. A glycan (N-linked (GlcNAc...) asparagine) is linked at Asn206. Ser300, Thr301, Gly302, Trp322, Tyr336, and His337 together coordinate CMP-N-acetyl-beta-neuraminate. His354 functions as the Proton donor/acceptor in the catalytic mechanism.

Belongs to the glycosyltransferase 29 family. As to quaternary structure, homodimer. In terms of processing, autopolysialylated. As to expression, expressed in fetal and adult brain and fetal liver.

It localises to the golgi apparatus membrane. The catalysed reaction is [N-acetyl-alpha-D-neuraminosyl-(2-&gt;8)](n) + CMP-N-acetyl-beta-neuraminate = [N-acetyl-alpha-D-neuraminosyl-(2-&gt;8)](n+1) + CMP + H(+). It carries out the reaction alpha-Neu5Ac-(2-&gt;3)-beta-D-Gal-(1-&gt;4)-6S-D-GlcNAc + CMP-N-acetyl-beta-neuraminate = alpha-Neu5Ac-(2-&gt;8)-alpha-Neu5Ac-(2-&gt;3)-beta-D-Gal-(1-&gt;4)-6S-D-GlcNAc + CMP + H(+). It catalyses the reaction a ganglioside GM3 (d18:1(4E)) + CMP-N-acetyl-beta-neuraminate = a ganglioside GD3 (d18:1(4E)) + CMP + H(+). The enzyme catalyses a ganglioside GM3 + CMP-N-acetyl-beta-neuraminate = a ganglioside GD3 + CMP + H(+). The catalysed reaction is an N-acetyl-alpha-neuraminyl-(2-&gt;3)-beta-D-galactosyl derivative + CMP-N-acetyl-beta-neuraminate = an N-acetyl-alpha-neuraminyl-(2-&gt;8)-N-acetyl-alpha-neuraminyl-(2-&gt;3)-beta-D-galactosyl derivative + CMP + H(+). It carries out the reaction an N-acetyl-alpha-neuraminyl-(2-&gt;3)-beta-D-galactosyl-(1-&gt;4)-N-acetyl-beta-D-glucosaminyl derivative + CMP-N-acetyl-beta-neuraminate = an alpha-Neu5Ac-(2-&gt;8)-alpha-Neu5Ac-(2-&gt;3)-beta-D-Gal-(1-&gt;4)-beta-D-GlcNAc derivative + CMP + H(+). It functions in the pathway protein modification; protein glycosylation. Its function is as follows. Catalyzes the transfer of sialic acid from a CMP-linked sialic acid donor onto a terminal alpha-2,3-, alpha-2,6-, or alpha-2,8-linked sialic acid of an acceptor, such as N-linked oligosaccharides of glycoproteins and glycolipids through alpha-2,8-linkages. Forms oligosialic and polysialic acid on various sialylated N-acetyllactosamine oligosaccharides of glycoproteins, including FETUB N-glycans, a2-HS-glycoprotein (AHSG) and alpha 2,3-sialylated glycosphingolipids, such as alpha 2,3-sialylparagloboside and ganglioside GM3 and to a lesser extent NCAM1 N-glycans. However, it is much more specific to N-linked oligosaccharides of glycoproteins than glycosphingolipids. 2,3-sialylparagloboside serves as the best acceptor substrate among the glycolipids. alpha-Neu5Ac-(2-&gt;8)-alpha-Neu5Ac-(2-&gt;3)-beta-D-Gal-(1-&gt;4)-6S-D-GlcNAc and monosialyl and disialyl N-acetyllactosamines are the best acceptor substrates among glycoproteins. May plays critical role in the striatum by mediating the formation of disialylated and trisialylated terminal glycotopes on N- and O-glycans of specific striatal proteins, regulating their distribution in lipid rafts, affecting their interaction with other binding partners, and subsequently modulating striatal functions. This chain is Alpha-N-acetylneuraminate alpha-2,8-sialyltransferase ST8SIA3, found in Homo sapiens (Human).